The sequence spans 279 residues: Prephenate dehydratase (279 aa).

The Prephenate dehydratase domain occupies 2-178 (KIAYLGPRGS…NSTRFWLLGK (177 aa)). Residues 194–270 (LALTLPDNLP…LGVKVRLLGN (77 aa)) enclose the ACT domain.

It carries out the reaction prephenate + H(+) = 3-phenylpyruvate + CO2 + H2O. It functions in the pathway amino-acid biosynthesis; L-phenylalanine biosynthesis; phenylpyruvate from prephenate: step 1/1. This chain is Prephenate dehydratase (pheA), found in Lactococcus lactis subsp. lactis (strain IL1403) (Streptococcus lactis).